We begin with the raw amino-acid sequence, 241 residues long: Fatty acid metabolism regulator protein (241 aa).

The HTH gntR-type domain maps to Gln-11 to Ile-79. Positions Glu-39–Gln-58 form a DNA-binding region, H-T-H motif.

In terms of assembly, homodimer.

It is found in the cytoplasm. Multifunctional regulator of fatty acid metabolism. The sequence is that of Fatty acid metabolism regulator protein from Haemophilus influenzae (strain PittEE).